A 209-amino-acid polypeptide reads, in one-letter code: Kynurenine formamidase (209 aa).

Trp-18 provides a ligand contact to substrate. Positions 48, 52, and 54 each coordinate Zn(2+). Catalysis depends on His-58, which acts as the Proton donor/acceptor. Zn(2+) is bound by residues His-160 and Glu-172.

This sequence belongs to the Cyclase 1 superfamily. KynB family. As to quaternary structure, homodimer. The cofactor is Zn(2+).

It catalyses the reaction N-formyl-L-kynurenine + H2O = L-kynurenine + formate + H(+). Its pathway is amino-acid degradation; L-tryptophan degradation via kynurenine pathway; L-kynurenine from L-tryptophan: step 2/2. In terms of biological role, catalyzes the hydrolysis of N-formyl-L-kynurenine to L-kynurenine, the second step in the kynurenine pathway of tryptophan degradation. The sequence is that of Kynurenine formamidase from Paraburkholderia phymatum (strain DSM 17167 / CIP 108236 / LMG 21445 / STM815) (Burkholderia phymatum).